A 572-amino-acid polypeptide reads, in one-letter code: Proline--tRNA ligase (572 aa).

The protein belongs to the class-II aminoacyl-tRNA synthetase family. ProS type 1 subfamily. As to quaternary structure, homodimer.

Its subcellular location is the cytoplasm. It carries out the reaction tRNA(Pro) + L-proline + ATP = L-prolyl-tRNA(Pro) + AMP + diphosphate. In terms of biological role, catalyzes the attachment of proline to tRNA(Pro) in a two-step reaction: proline is first activated by ATP to form Pro-AMP and then transferred to the acceptor end of tRNA(Pro). As ProRS can inadvertently accommodate and process non-cognate amino acids such as alanine and cysteine, to avoid such errors it has two additional distinct editing activities against alanine. One activity is designated as 'pretransfer' editing and involves the tRNA(Pro)-independent hydrolysis of activated Ala-AMP. The other activity is designated 'posttransfer' editing and involves deacylation of mischarged Ala-tRNA(Pro). The misacylated Cys-tRNA(Pro) is not edited by ProRS. This Salmonella newport (strain SL254) protein is Proline--tRNA ligase.